The primary structure comprises 290 residues: Ribosomal RNA small subunit methyltransferase A (290 aa).

6 residues coordinate S-adenosyl-L-methionine: asparagine 28, leucine 30, glycine 55, glutamate 76, aspartate 102, and asparagine 126.

It belongs to the class I-like SAM-binding methyltransferase superfamily. rRNA adenine N(6)-methyltransferase family. RsmA subfamily.

The protein localises to the cytoplasm. The catalysed reaction is adenosine(1518)/adenosine(1519) in 16S rRNA + 4 S-adenosyl-L-methionine = N(6)-dimethyladenosine(1518)/N(6)-dimethyladenosine(1519) in 16S rRNA + 4 S-adenosyl-L-homocysteine + 4 H(+). In terms of biological role, specifically dimethylates two adjacent adenosines (A1518 and A1519) in the loop of a conserved hairpin near the 3'-end of 16S rRNA in the 30S particle. May play a critical role in biogenesis of 30S subunits. The protein is Ribosomal RNA small subunit methyltransferase A of Lachnoclostridium phytofermentans (strain ATCC 700394 / DSM 18823 / ISDg) (Clostridium phytofermentans).